Here is a 603-residue protein sequence, read N- to C-terminus: Zyxin (603 aa).

The segment covering methionine 1 to leucine 13 has biased composition (pro residues). Disordered regions lie at residues methionine 1–proline 131, threonine 166–serine 193, alanine 218–glycine 237, arginine 310–serine 333, and leucine 363–threonine 395. Residues valine 69 to tyrosine 95 are compositionally biased toward basic and acidic residues. Positions glutamate 184–serine 193 are enriched in polar residues. The segment covering alanine 218–asparagine 234 has biased composition (low complexity). 3 stretches are compositionally biased toward polar residues: residues threonine 315–serine 333, leucine 363–isoleucine 373, and proline 382–alanine 391. 3 consecutive LIM zinc-binding domains span residues asparagine 409–lysine 470, cysteine 471–proline 529, and arginine 530–serine 601.

This sequence belongs to the zyxin/ajuba family. Interacts with dyc-1. Interacts with glh-1 and glh-3. In terms of tissue distribution, expressed in neurons and body wall muscle. Expressed in pharyngeal, enteric and uterine muscles and in spermatheca.

Its subcellular location is the nucleus. It localises to the cytoplasm. The protein localises to the myofibril. It is found in the sarcomere. The protein resides in the m line. Its subcellular location is the cell projection. It localises to the axon. The protein localises to the cell junction. It is found in the focal adhesion. The protein resides in the cytoskeleton. In terms of biological role, functions both as a mechanical stabilizer (via LIM domains) of focal adhesions, and as a sensor component for muscle cell damage (via N-terminus). Regulates, stabilizes and maintains posterior lateral mechanosensory (PLM) synaptic branch extension and new synapse formation and growth during larval development. In Caenorhabditis elegans, this protein is Zyxin.